A 491-amino-acid polypeptide reads, in one-letter code: UDP-N-acetylmuramate--L-alanine ligase (491 aa).

126 to 132 (GTHGKTT) lines the ATP pocket.

It belongs to the MurCDEF family.

The protein localises to the cytoplasm. The enzyme catalyses UDP-N-acetyl-alpha-D-muramate + L-alanine + ATP = UDP-N-acetyl-alpha-D-muramoyl-L-alanine + ADP + phosphate + H(+). Its pathway is cell wall biogenesis; peptidoglycan biosynthesis. Functionally, cell wall formation. This Shigella flexneri protein is UDP-N-acetylmuramate--L-alanine ligase.